A 552-amino-acid chain; its full sequence is MKRSDVFLRPEYAPHRALWRASGLIDEELRRPLIGVANSWNEIVPGHVHLDKVAEAVKAGIRMAGGTPLEFGTIAVCDGIAMGHEGMRYSLPSREVIADTVEIMVEAHRLDAVVMVTNCDKITPGFLLAAARLEVPVILINGGPMMPGVYGKERIDFKDLMERMNVLIKEGRTEELRKLEESALPGPGSCAGLFTANTMNMLSEAMGLMLPGASTVPAVEARRLWYAKLTGMRIVKMVEEGLTPDKILTRKALENAIAVDMALGGSTNSVLHLEALAYELGIDLPLEVFDEISRKVPHIASISPSGRHFVVDLDRAGGIPAVLKELGEAGLIHKDALTVTGKTVWENVKDAAVLDREVIRPLDNPYSPFGGLAILKGSLAPNGAVVKASAVKRELWKFKGVARVFDREEDAVKAIRGGEIEPGTVIVIRYEGPRGGPGMREMLTATAAVMALGLGDKVALVTDGRFSGATRGPAIGHVSPEAAAGGPIALVQDGDEIVIDIEKRRLDLLVDEKELEERRARWKPKVKPLRRGILRRYAKMALSADKGGALEY.

Asp78 is a binding site for Mg(2+). Position 119 (Cys119) interacts with [2Fe-2S] cluster. Mg(2+) is bound by residues Asp120 and Lys121. An N6-carboxylysine modification is found at Lys121. Cys190 is a [2Fe-2S] cluster binding site. A Mg(2+)-binding site is contributed by Glu441. The active-site Proton acceptor is Ser467.

It belongs to the IlvD/Edd family. Homodimer. The cofactor is [2Fe-2S] cluster. Requires Mg(2+) as cofactor.

The enzyme catalyses (2R)-2,3-dihydroxy-3-methylbutanoate = 3-methyl-2-oxobutanoate + H2O. It catalyses the reaction (2R,3R)-2,3-dihydroxy-3-methylpentanoate = (S)-3-methyl-2-oxopentanoate + H2O. It participates in amino-acid biosynthesis; L-isoleucine biosynthesis; L-isoleucine from 2-oxobutanoate: step 3/4. The protein operates within amino-acid biosynthesis; L-valine biosynthesis; L-valine from pyruvate: step 3/4. Functionally, functions in the biosynthesis of branched-chain amino acids. Catalyzes the dehydration of (2R,3R)-2,3-dihydroxy-3-methylpentanoate (2,3-dihydroxy-3-methylvalerate) into 2-oxo-3-methylpentanoate (2-oxo-3-methylvalerate) and of (2R)-2,3-dihydroxy-3-methylbutanoate (2,3-dihydroxyisovalerate) into 2-oxo-3-methylbutanoate (2-oxoisovalerate), the penultimate precursor to L-isoleucine and L-valine, respectively. This is Dihydroxy-acid dehydratase from Ignicoccus hospitalis (strain KIN4/I / DSM 18386 / JCM 14125).